The following is a 266-amino-acid chain: MGYFKRVVLYIIVMVVSVFIIGCNKSSDTSEKPKEDSKETQIKKSFAKTLDMYPIKNLEDLYDKEGYRDGEFKKGDKGMWTIYTDFAKSNKQGGLSNEGMVLYLDRNTRTAKGHYFVKTFYNKGKFPDRKNYKVEMKNNKIILLDKVEDINLKKRIENFKFFGQYANLKELKNYSNGDVSINENVPSYDAKFKMSNKDENVKQLRSRYNIPTDKAPVLKMHIDGDLKGSSVGYKKLEIDFSKGEKSDLSVIDSLNFQPAKVDEDDE.

Positions 1–22 are cleaved as a signal peptide; that stretch reads MGYFKRVVLYIIVMVVSVFIIG. Cys-23 carries the N-palmitoyl cysteine lipid modification. Residue Cys-23 is the site of S-diacylglycerol cysteine attachment.

Belongs to the staphylococcal tandem lipoprotein family.

The protein localises to the cell membrane. This is an uncharacterized protein from Staphylococcus aureus (strain N315).